A 240-amino-acid polypeptide reads, in one-letter code: Uridylate kinase (240 aa).

Residue 14–17 (KLSG) coordinates ATP. Residue G56 participates in UMP binding. ATP is bound by residues G57 and R61. UMP is bound by residues D76 and 137–144 (TGNPFFTT). ATP is bound by residues T164, Y170, and D173.

The protein belongs to the UMP kinase family. As to quaternary structure, homohexamer.

It is found in the cytoplasm. It carries out the reaction UMP + ATP = UDP + ADP. Its pathway is pyrimidine metabolism; CTP biosynthesis via de novo pathway; UDP from UMP (UMPK route): step 1/1. Its activity is regulated as follows. Inhibited by UTP. Its function is as follows. Catalyzes the reversible phosphorylation of UMP to UDP. The protein is Uridylate kinase of Verminephrobacter eiseniae (strain EF01-2).